Reading from the N-terminus, the 185-residue chain is Ribosome-recycling factor (185 aa).

Belongs to the RRF family.

The protein localises to the cytoplasm. Functionally, responsible for the release of ribosomes from messenger RNA at the termination of protein biosynthesis. May increase the efficiency of translation by recycling ribosomes from one round of translation to another. The polypeptide is Ribosome-recycling factor (Campylobacter lari (strain RM2100 / D67 / ATCC BAA-1060)).